We begin with the raw amino-acid sequence, 92 residues long: Large ribosomal subunit protein bL34m (92 aa).

A mitochondrion-targeting transit peptide spans 1-46; that stretch reads MAFLARCFGCQACRSVALLSGRYLQSRVWMGLPDSWPLLSLQQARG. Phosphoserine is present on Ser-71.

This sequence belongs to the bacterial ribosomal protein bL34 family. In terms of assembly, component of the mitochondrial ribosome large subunit (39S) which comprises a 16S rRNA and about 50 distinct proteins.

Its subcellular location is the mitochondrion. In Mus musculus (Mouse), this protein is Large ribosomal subunit protein bL34m (Mrpl34).